A 558-amino-acid polypeptide reads, in one-letter code: Cytochrome P450 monooxygenase grgG (558 aa).

A helical transmembrane segment spans residues proline 11–leucine 31. Cysteine 470 lines the heme pocket.

Belongs to the cytochrome P450 family. Heme serves as cofactor.

Its subcellular location is the membrane. It participates in secondary metabolite biosynthesis. Functionally, cytochrome P450 monooxygenase; part of the gene cluster that mediates the biosynthesis of gregatin A, a fungal polyketide featuring an alkylated furanone core. The PKS grgA synthesizes C11 and C4 polyketide chains in the presence and absence of the trans-enoyl reductase grgB, respectively. The polyketide transferase grgF is then responsible for the fusion of the two carbon chains to produce the furanone skeleton of gregatin A. Next, the cytochrome P450 monooxygenase grgG performs the oxidative cyclization to furnish the gregatin scaffold and leads to the formation of desmethylgregatin A. In this transformation, grgG initially abstracts a hydrogen atom from C-8 to generate a substrate radical, from which one electron is transferred to the iron-heme center to yield a carbocationic species. Heterocyclization along with double-bond isomerizations provides desmethylgregatin A with the furanone ring. Alternatively, grgG might provide hydroxylation at the C-8 radical, which is followed by dehydration to give the cyclized desmethylgregatin A. Finally, the O-methyltransferase grgD methylates the carboxyl group of desmethylgregatin A to provide gregatin A. The protein is Cytochrome P450 monooxygenase grgG (grgG) of Penicillium sp.